Here is a 328-residue protein sequence, read N- to C-terminus: Adenosine receptor A1 (328 aa).

The Extracellular segment spans residues 1–10 (MPPSISAFQA). Residues 11–33 (AYIGIEVLIALVSVPGNVLVIWA) traverse the membrane as a helical segment. At 34–46 (VKVNQALRDATFC) the chain is on the cytoplasmic side. The chain crosses the membrane as a helical span at residues 47–69 (FIVSLAVADVAVGALVIPLAILI). Residues 70–80 (NIGPETYFHTC) lie on the Extracellular side of the membrane. A disulfide bond links cysteine 80 and cysteine 169. Residues 81–102 (LMVACPVLILTQSSILALLAIA) form a helical membrane-spanning segment. Topologically, residues 103 to 123 (VDRYLRVKIPLRYKAVVTPRR) are cytoplasmic. The chain crosses the membrane as a helical span at residues 124 to 146 (AAVAIAGCWILSLVVGLTPMFGW). Residues 147-176 (NNLREVQRAWAANGSVGEPVIKCEFEKVIS) are Extracellular-facing. N-linked (GlcNAc...) asparagine glycosylation is present at asparagine 159. A helical membrane pass occupies residues 177–201 (MEYMVYFNFFVWVLPPLLLMVLIYL). The Cytoplasmic segment spans residues 202 to 235 (EVFYLIRRQLSKKASASSGDPHKYYGKELKIAKS). A helical transmembrane segment spans residues 236–259 (LALILFLFALSWLPLHILNCVTLF). Over 260 to 267 (CPSCQKPS) the chain is Extracellular. Residues 268–292 (ILVYTAIFLTHGNSAMNPIVYAFRI) traverse the membrane as a helical segment. At 293–328 (HKFRVTFLKIWNDHFRCRPAPAGDGDEDLPEEKPND) the chain is on the cytoplasmic side. The S-palmitoyl cysteine moiety is linked to residue cysteine 309.

The protein belongs to the G-protein coupled receptor 1 family.

Its subcellular location is the cell membrane. Its function is as follows. Receptor for adenosine. The activity of this receptor is mediated by G proteins which inhibit adenylyl cyclase. This is Adenosine receptor A1 (ADORA1) from Oryctolagus cuniculus (Rabbit).